The sequence spans 640 residues: Tyrosine--tRNA ligase, mitochondrial (640 aa).

Tyr100 contributes to the L-tyrosine binding site. Asp104 contacts ATP. The 'HIGH' region motif lies at 105–114; it reads PTAPSLHIGH. The L-tyrosine site is built by Asp144, Tyr248, Gln252, Asp255, and Gln274. The 'KMSKS' region signature appears at 322–326; it reads KFGKS. Position 325 (Lys325) interacts with ATP.

Belongs to the class-I aminoacyl-tRNA synthetase family.

It is found in the mitochondrion matrix. It catalyses the reaction tRNA(Tyr) + L-tyrosine + ATP = L-tyrosyl-tRNA(Tyr) + AMP + diphosphate + H(+). Its function is as follows. Has both an aminoacyl-tRNA synthetase activity and is involved in the splicing of group I introns. The polypeptide is Tyrosine--tRNA ligase, mitochondrial (YTS1) (Podospora anserina (Pleurage anserina)).